The following is a 178-amino-acid chain: Protein GrpE (178 aa).

Belongs to the GrpE family. In terms of assembly, homodimer.

Its subcellular location is the cytoplasm. In terms of biological role, participates actively in the response to hyperosmotic and heat shock by preventing the aggregation of stress-denatured proteins, in association with DnaK and GrpE. It is the nucleotide exchange factor for DnaK and may function as a thermosensor. Unfolded proteins bind initially to DnaJ; upon interaction with the DnaJ-bound protein, DnaK hydrolyzes its bound ATP, resulting in the formation of a stable complex. GrpE releases ADP from DnaK; ATP binding to DnaK triggers the release of the substrate protein, thus completing the reaction cycle. Several rounds of ATP-dependent interactions between DnaJ, DnaK and GrpE are required for fully efficient folding. This is Protein GrpE from Bordetella avium (strain 197N).